Consider the following 2104-residue polypeptide: MESQEFIVLYTHQKMKKSKVWQDGILKITHLGNKAILYDDKGACLESLFLKCLEVKPGDDLESDRYLITVEEVKVAGAIGIVKQNVNKEAPELNSRTFISSGRSLGCQPSGLKRKFTGFQGPRQVPKKMVIMESGESAASHEAKKTGPTIFSPFCSMPPLFPTVGKKDVNNILADPENIVTYKNRERNAMDFSSVFSPSFQINPEVLCEENYFCSPVNSGNKLSDSLLTNEPVKRDSLASHYSGVSQNIRSKAQILALLKSESSSSCEELNSEMTEHFPQKQPQGSLKIATKPKYLIQQEECAEMKSTENLYYQHQSENTMRNKSRWAMYLSSQSSPIHSSTVDGNDTERKPKAQEDDVNSNLKDLSLQKIIQFVETYAEERKKYNVDQSVGNNDPSWNQEVKLEIPSFNESSSLQVTCSSAENDGILSESDIQEDNKIPFNQNDKGCIKGSVLIKENAQEVNTCGTLEKEYEQSESSLPELKHLQIESSNNSRISDDITDMISESKMDNESLNSIHESLSNVTQPFLEVTFNLNNFETSDTEEESQESNKISQDSESWVKDILVNDGNSCFQKRSENTNCEEIEGEHLPFLTSVSDKPTVTFPVKETLPSQFCDKTYVGFDMGICKTENTGKEIEEYSDTLSNFESFKWTDAVYGDNKEDANKPIQEVRINYDFALPPNKSKGINMNLHIPHIQNQIAENSNLFSEDAQPQPFILGSDLDKNDEHVLPSTSSSDNSVQLLNTNQNHYECIALDKSNTHISNSLFYPLGKKHLISKDTEAHISEPEDLGKIRSPPPDHVEVETAREGKQYWNPRNSSELSGLVNTISILKSLCEHSTALDSLEILKKKNTVFQQGTQQTYEPDSPPEVRKPFITVVSPKSPHLHKDSQQILKEDEVELSEPLQSVQFSSSGSKEETAFQAVIPKQIERKTCDPKPVEFQGHQVKGSATSGVMVRGHSSQLGCSQFPDSTEYENFMTETPELPSTCMQIDFLQVTSPEENISTLSPVSTFSLNSRDEDFMVEFSETSLKARTLPDDLHFLNLEGMKKSRSLENENLQRLSLLSRTQVPLITLPRTDGPPDLDSHSYMINSNTYESSGSPMLNLCEKSAVLSFSIEPEDQNETFFSEESREVNPGDVSLNNISTQSKWLKYQNTSQCNVATPNRVDKRITDGFFAEAVSGMHFRDTSERQSDAVNESSLDSVHLQMIKGMLYQQRQDFSSQDSVSRKKVLSLNLKQTSKTEEIKNVLGGSTCYNYSVKDLQEISGSELCFPSGQKIKSAYLPQRQIHIPAVFQSPAHYKQTFTSCLIEHLNILLFGLAQNLQKALSKVDISFYTSLKGEKLKNAENNVPSCHHSQPAKLVMVKKEGPNKGRLFYTCDGPKADRCKFFKWLEDVTPGYSTQEGARPGMVLSDIKSIGLYLRSQKIPLYEECQLLVRKGFDFQRKQYGKLKKFTTVNPEFYNEPKTKLYLKLSRKERSSAYSKNDLWVVSKTLDFELDTFIACSAFFGPSSINEIEILPLKGYFPSNWPTNMVVHALLVCNASTELTTLKNIQDYFNPATLPLTQYLLTTSSPTIVSNKRVSKRKFIPPAFTNVSTKFELLSLGATLKLASELIQVHKLNKDQATALIQIAQMMASHESIEEVKELQTHTFPITIIHGVFGAGKSYLLAVVILFFVQLFEKSEAPTIGNARPWKLLISSSTNVAVDRVLLGLLSLGFENFIRVGSVRKIAKPILPYSLHAGSENESEQLKELHALMKEDLTPTERVYVRKSIEQHKLGTNRTLLKQVRVVGVTCAACPFPCMNDLKFPVVVLDECSQITEPASLLPIARFECEKLILVGDPKQLPPTIQGSDAAHENGLEQTLFDRLCLMGHKPILLRTQYRCHPAISAIANDLFYKGALMNGVTEIERSPLLEWLPTLCFYNVKGLEQIERDNSFHNVAEATFTLKLIQSLIASGIAGSMIGVITLYKSQMYKLCHLLSAVDFHHPDIKTVQVSTVDAFQGAEKEIIILSCVRTRQVGFIDSEKRMNVALTRGKRHLLIVGNLACLRKNQLWGRVIQHCEGREDGLQHANQYEPQLNHLLKDYFEKQVEEKQKKKSEKEKSKDKSHS.

Polar residues predominate over residues 335–345; sequence SSPIHSSTVDG. The interval 335 to 359 is disordered; it reads SSPIHSSTVDGNDTERKPKAQEDDV. Ser336 is subject to Phosphoserine. A compositionally biased stretch (basic and acidic residues) spans 347–356; that stretch reads DTERKPKAQE. Phosphoserine occurs at positions 793 and 864. 4 residues coordinate Zn(2+): Cys1349, His1351, Cys1374, and Cys1382. The segment at 1349 to 1391 adopts a GRF-type zinc-finger fold; that stretch reads CHHSQPAKLVMVKKEGPNKGRLFYTCDGPKADRCKFFKWLEDV. Residues 2085–2104 form a disordered region; that stretch reads VEEKQKKKSEKEKSKDKSHS.

Interacts with DNA repair protein RAD51; the interaction promotes RAD51 strand exchange activity. Also interacts with DNA repair proteins EXO1 and BRCA1; the interactions are increased following DNA damage induction.

It localises to the nucleus. It carries out the reaction ATP + H2O = ADP + phosphate + H(+). It catalyses the reaction Couples ATP hydrolysis with the unwinding of duplex DNA at the replication fork by translocating in the 5'-3' direction. This creates two antiparallel DNA single strands (ssDNA). The leading ssDNA polymer is the template for DNA polymerase III holoenzyme which synthesizes a continuous strand.. Functionally, 5'-3' DNA helicase which is recruited to sites of DNA damage and promotes repair of replication-blocking DNA lesions through stimulation of homologous recombination (HR). Promotes HR by directly stimulating RAD51-mediated strand exchange activity. Not required to load RAD51 at sites of DNA damage but promotes recombinational repair after RAD51 recruitment. Also promotes HR by positively regulating EXO1-mediated DNA end resection of double-strand breaks. Required for recruitment of replication protein RPA2 to DNA damage sites. Promotes the initiation of the G2/M checkpoint but not its maintenance. Catalyzes Holliday junction branch migration and dissociation of D-loops and DNA flaps. This chain is 5'-3' DNA helicase ZGRF1 (ZGRF1), found in Homo sapiens (Human).